The primary structure comprises 540 residues: T-complex protein 1 subunit theta (540 aa).

It belongs to the TCP-1 chaperonin family. In terms of assembly, heterooligomeric complex of about 850 to 900 kDa that forms two stacked rings, 12 to 16 nm in diameter.

It localises to the cytoplasm. Functionally, molecular chaperone; assists the folding of proteins upon ATP hydrolysis. Known to play a role, in vitro, in the folding of actin and tubulin. In yeast may play a role in mitotic spindle formation. The protein is T-complex protein 1 subunit theta (CCT8) of Candida albicans (Yeast).